The chain runs to 87 residues: Lipid-anchored plasma membrane protein uvi15 (87 aa).

The tract at residues 1–64 is disordered; it reads MSAQQFYGDK…MYVQQPQASD (64 aa). Residues 18 to 41 are compositionally biased toward low complexity; the sequence is QQAYGGPNYYPPQQNYPQQGYAPP.

Belongs to the CYSTM1 family. In terms of processing, palmitoylated.

Its subcellular location is the cell membrane. It is found in the cell tip. Its function is as follows. Required for the maintenance of viability of cells in stationary phase and in starvation conditions. This Schizosaccharomyces pombe (strain 972 / ATCC 24843) (Fission yeast) protein is Lipid-anchored plasma membrane protein uvi15 (uvi15).